The primary structure comprises 321 residues: Lipoyl synthase (321 aa).

Residues Cys-68, Cys-73, Cys-79, Cys-94, Cys-98, Cys-101, and Ser-308 each contribute to the [4Fe-4S] cluster site. The 218-residue stretch at 80-297 (FNHGTATFMI…KAEALAMGFT (218 aa)) folds into the Radical SAM core domain.

It belongs to the radical SAM superfamily. Lipoyl synthase family. Requires [4Fe-4S] cluster as cofactor.

Its subcellular location is the cytoplasm. The catalysed reaction is [[Fe-S] cluster scaffold protein carrying a second [4Fe-4S](2+) cluster] + N(6)-octanoyl-L-lysyl-[protein] + 2 oxidized [2Fe-2S]-[ferredoxin] + 2 S-adenosyl-L-methionine + 4 H(+) = [[Fe-S] cluster scaffold protein] + N(6)-[(R)-dihydrolipoyl]-L-lysyl-[protein] + 4 Fe(3+) + 2 hydrogen sulfide + 2 5'-deoxyadenosine + 2 L-methionine + 2 reduced [2Fe-2S]-[ferredoxin]. It participates in protein modification; protein lipoylation via endogenous pathway; protein N(6)-(lipoyl)lysine from octanoyl-[acyl-carrier-protein]: step 2/2. In terms of biological role, catalyzes the radical-mediated insertion of two sulfur atoms into the C-6 and C-8 positions of the octanoyl moiety bound to the lipoyl domains of lipoate-dependent enzymes, thereby converting the octanoylated domains into lipoylated derivatives. This is Lipoyl synthase from Salmonella paratyphi A (strain AKU_12601).